The primary structure comprises 247 residues: 3-oxoacyl-[acyl-carrier-protein] reductase MabA (247 aa).

NADP(+)-binding positions include 25–27 (RGI), Arg-47, 61–62 (DV), Gly-90, Tyr-153, Lys-157, Ile-186, and Arg-197. Tyr-153 acts as the Proton acceptor in catalysis.

This sequence belongs to the short-chain dehydrogenases/reductases (SDR) family. As to quaternary structure, homotetramer.

It is found in the secreted. The protein localises to the cell wall. The enzyme catalyses a (3R)-hydroxyacyl-[ACP] + NADP(+) = a 3-oxoacyl-[ACP] + NADPH + H(+). It functions in the pathway lipid metabolism; mycolic acid biosynthesis. In terms of biological role, part of the mycobacterial fatty acid elongation system FAS-II, which is involved in mycolic acid biosynthesis. Catalyzes the NADPH-dependent reduction of beta-ketoacyl derivatives, the second step of the FAS-II elongation cycle. The polypeptide is 3-oxoacyl-[acyl-carrier-protein] reductase MabA (Mycobacterium bovis (strain ATCC BAA-935 / AF2122/97)).